Here is a 470-residue protein sequence, read N- to C-terminus: Serine hydroxymethyltransferase 5 (470 aa).

Position 244 is an N6-(pyridoxal phosphate)lysine (Lys-244).

Belongs to the SHMT family. Homotetramer. It depends on pyridoxal 5'-phosphate as a cofactor.

Its subcellular location is the cytoplasm. It carries out the reaction (6R)-5,10-methylene-5,6,7,8-tetrahydrofolate + glycine + H2O = (6S)-5,6,7,8-tetrahydrofolate + L-serine. It functions in the pathway one-carbon metabolism; tetrahydrofolate interconversion. Its function is as follows. Catalyzes the interconversion of serine and glycine. In Arabidopsis thaliana (Mouse-ear cress), this protein is Serine hydroxymethyltransferase 5 (SHM5).